Consider the following 344-residue polypeptide: Signal peptide peptidase (344 aa).

Residues 1–11 lie on the Lumenal side of the membrane; it reads MKNCERFANLA. The helical transmembrane segment at 12–32 threads the bilayer; it reads LAGLTLAPLVVRVNPNLNVIL. The Cytoplasmic portion of the chain corresponds to 33 to 62; the sequence is TACITVYVGCFRSVKDTPPTETMSKEHAMR. Residues 63 to 83 form a helical membrane-spanning segment; that stretch reads FPLVGSAMLLSLFLLFKFLSK. Residues 84–89 are Lumenal-facing; that stretch reads DLVNAV. A helical transmembrane segment spans residues 90-110; it reads LTAYFFVLGIVALSATLLPAI. Over 111–136 the chain is Cytoplasmic; that stretch reads RRFLPNPWNDNLIVWRFPYFKSLEVE. Residues 137–157 form a helical membrane-spanning segment; it reads FTKSQVVAGIPGTFFCAWYAW. At 158–160 the chain is on the lumenal side; sequence KKH. A helical membrane pass occupies residues 161–181; the sequence is WLANNILGLSFCIQGIEMLSL. Residues 182 to 188 are Cytoplasmic-facing; sequence GSFKTGA. A helical membrane pass occupies residues 189–209; sequence ILLAGLFFYDIFWVFFTPVMV. Aspartate 198 is an active-site residue. Residues 210–230 are Lumenal-facing; that stretch reads SVAKSFDAPIKLLFPTGDALR. The helical transmembrane segment at 231-251 threads the bilayer; the sequence is PYSMLGLGDIVIPGIFVALAL. Residue aspartate 239 is part of the active site. The Cytoplasmic portion of the chain corresponds to 252–263; the sequence is RFDVSRRRQPQY. A helical membrane pass occupies residues 264-284; that stretch reads FTSAFIGYAVGVILTIVVMNW. The Lumenal portion of the chain corresponds to 285 to 290; sequence FQAAQP. The PAL motif lies at 290–292; the sequence is PAL. The helical transmembrane segment at 291-311 threads the bilayer; that stretch reads ALLYIVPAVIGFLASHCIWNG. At 312-344 the chain is on the cytoplasmic side; it reads DIKPLLAFDESKTEEATTDESKTSEEVNKAHDE. The tract at residues 323–344 is disordered; that stretch reads KTEEATTDESKTSEEVNKAHDE.

This sequence belongs to the peptidase A22B family. As to expression, ubiquitous with the highest expression in emerging leaves, roots, and floral tissues (at the protein level). Highly detected in pollen.

The protein localises to the endoplasmic reticulum membrane. Intramembrane-cleaving aspartic protease (I-CLiP) that cleaves type II membrane signal peptides in the hydrophobic plane of the membrane. Catalyzes intramembrane proteolysis of some signal peptides after they have been cleaved from a preprotein, resulting in the release of the fragment from the ER membrane into the cytoplasm. Plays a critical role in the development and function of the reproductive tissues, especially in pollen development. This is Signal peptide peptidase (SPP) from Arabidopsis thaliana (Mouse-ear cress).